We begin with the raw amino-acid sequence, 359 residues long: Proton-gated ion channel (359 aa).

Positions methionine 1–glycine 43 are cleaved as a signal peptide. Residues glutamine 44–glutamine 235 are Periplasmic-facing. The chain crosses the membrane as a helical span at residues tyrosine 236–phenylalanine 258. Residues tryptophan 259–threonine 261 are Cytoplasmic-facing. The helical transmembrane segment at serine 262–threonine 286 threads the bilayer. At asparagine 287–methionine 294 the chain is on the periplasmic side. The chain crosses the membrane as a helical span at residues threonine 295–valine 323. The Cytoplasmic portion of the chain corresponds to glutamate 324–glutamine 326. Residues proline 327 to phenylalanine 359 traverse the membrane as a helical segment.

Belongs to the ligand-gated ion channel (TC 1.A.9) family. Homopentamer.

It is found in the cell inner membrane. Its activity is regulated as follows. Tetraethylammonium (TEA) and tetrabutylammonium (TBA) inhibit the proton-activated currents in a dose- and voltage-dependent manner in vitro, whereas the blocker of acid sensing ion channels, amiloride, has no effect. Channel current of GLIC can be inhibited by inhaled and intravenous general anesthetics at and below concentrations used clinically. Ion conduction is also inhibited by lidocaine and by divalent transition metal ions such as cadmium ions. Its function is as follows. Cationic channel with similar permeabilities for Na(+) and K(+), that is activated by an increase of the proton concentration on the extracellular side. Displays no permeability for chloride ions. Shows slow kinetics of activation, no desensitization and a single channel conductance of 8 pS. Might contribute to adaptation to external pH change. The protein is Proton-gated ion channel (glvI) of Gloeobacter violaceus (strain ATCC 29082 / PCC 7421).